The following is a 490-amino-acid chain: ATP synthase subunit beta, chloroplastic (490 aa).

Residue 170–177 participates in ATP binding; sequence GGAGVGKT.

Belongs to the ATPase alpha/beta chains family. In terms of assembly, F-type ATPases have 2 components, CF(1) - the catalytic core - and CF(0) - the membrane proton channel. CF(1) has five subunits: alpha(3), beta(3), gamma(1), delta(1), epsilon(1). CF(0) has four main subunits: a(1), b(1), b'(1) and c(9-12).

The protein localises to the plastid. It localises to the chloroplast thylakoid membrane. The catalysed reaction is ATP + H2O + 4 H(+)(in) = ADP + phosphate + 5 H(+)(out). In terms of biological role, produces ATP from ADP in the presence of a proton gradient across the membrane. The catalytic sites are hosted primarily by the beta subunits. This is ATP synthase subunit beta, chloroplastic from Ipomoea setosa (Brazilian morning glory).